Reading from the N-terminus, the 215-residue chain is MNVKCPECGAWIYVVEEDSGGDAMEVKCPKCGTSIYVVKPMGEKMKNKRDKDFLDVKILEIEETKKTSPYKDTKSEDVLKALRVKANINGEIYEFRIWQIAKKPEYRGMVYVVKSVSHYCGSVKTKNFQVDEDNDIYVKQKFGIIEGVNKSKIKLPKERMEEIAEKLGFELKEGDEGLRLYLGEKYSENPPLSQRPELIEKLIKCWIAFWEPTMI.

This is an uncharacterized protein from Methanocaldococcus jannaschii (strain ATCC 43067 / DSM 2661 / JAL-1 / JCM 10045 / NBRC 100440) (Methanococcus jannaschii).